A 502-amino-acid polypeptide reads, in one-letter code: MLSDCLLNNFRITAQIGSGAYGLVFHVVDILTSREYAVKTVFKSSSMDEFYNKNGLNNNSQVARTTLLQTQLYHFFKSFQKKLFLPSVDLDSILQLTENELNRLPHYREIAFQLRVQSHGNIVKIHQVLESSIATFIVMDYYDRDLFTSIVDDKHFVNHGILIKKVFLQLCSALDHCHRLGIYHCDIKPENVLLDRNDNAYLCDFGLSTKSKYLAPNVCVGSSYYMAPERILYCLNTTTNGIHVDECCSSLPTDTGDIWSLGIILINLTCIRNPWLKAHQKEDNTFQHFANDNNVLKKILPISDELFTVLTKILQLNPYTRIDMKTLMSEVSSLTSFTREGPLSQVPILSSEVYMTHIIRNENLFLSDLSHFSADQEQQQQQQQQQQQVQEQEQEQKQEQIQNQEQAQQQQEEEDAEPESDIPSTYNSDGSMEKYEYTNNHNNSTFLTSSMDSTPYQSDIDDVSASKDCKFQQDTLRNRLLCLQMNFSTLTDGPNEKWLPDY.

The region spanning 10–338 (FRITAQIGSG…SEVSSLTSFT (329 aa)) is the Protein kinase domain. ATP contacts are provided by residues 16–24 (IGSGAYGLV) and Lys-39. Residue Asp-186 is the Proton acceptor of the active site. 2 stretches are compositionally biased toward low complexity: residues 376-391 (QEQQQQQQQQQQQVQE) and 399-410 (EQIQNQEQAQQQ). The segment at 376–439 (QEQQQQQQQQ…GSMEKYEYTN (64 aa)) is disordered. The segment covering 411–420 (QEEEDAEPES) has biased composition (acidic residues).

This sequence belongs to the protein kinase superfamily. Ser/Thr protein kinase family.

The enzyme catalyses L-seryl-[protein] + ATP = O-phospho-L-seryl-[protein] + ADP + H(+). The catalysed reaction is L-threonyl-[protein] + ATP = O-phospho-L-threonyl-[protein] + ADP + H(+). Its function is as follows. May have a role in glucose regulation. The polypeptide is Serine/threonine-protein kinase SKS1 (SKS1) (Saccharomyces cerevisiae (strain ATCC 204508 / S288c) (Baker's yeast)).